Reading from the N-terminus, the 201-residue chain is Recombination protein RecR (201 aa).

The C4-type zinc-finger motif lies at 60–75 (CSECGNMDVSDPCTVC). Residues 83-178 (AAICVVETVG…SITSLARGVP (96 aa)) form the Toprim domain.

Belongs to the RecR family.

May play a role in DNA repair. It seems to be involved in an RecBC-independent recombinational process of DNA repair. It may act with RecF and RecO. The sequence is that of Recombination protein RecR from Maricaulis maris (strain MCS10) (Caulobacter maris).